The sequence spans 682 residues: Methionine synthase reductase (682 aa).

Residues 4–147 (FLIAFGSQTG…EVEPWIEKFF (144 aa)) form the Flavodoxin-like domain. An FMN-binding site is contributed by 93 to 124 (LLGLGDSNYSSYQTIPRKIDKQLTALGANRLF). In terms of domain architecture, FAD-binding FR-type spans 271 to 516 (TKPFEVLVVS…GKEPARFRLP (246 aa)). Lys293 is an NADP(+) binding site. FAD contacts are provided by residues 455-458 (RPYS) and 488-491 (GLAT). Residues 607–609 (RVQ) and Asp643 contribute to the NADP(+) site. Trp681 is an FAD binding site.

FAD is required as a cofactor. The cofactor is FMN.

It catalyses the reaction 2 methylcob(III)alamin-[methionine synthase] + 2 S-adenosyl-L-homocysteine + NADP(+) + H(+) = 2 cob(II)alamin-[methionine synthase] + 2 S-adenosyl-L-methionine + NADPH. In terms of biological role, involved in the reductive regeneration of cob(I)alamin cofactor required for the maintenance of methionine synthase in a functional state. In Caenorhabditis elegans, this protein is Methionine synthase reductase.